We begin with the raw amino-acid sequence, 292 residues long: 4-hydroxy-tetrahydrodipicolinate synthase (292 aa).

Thr-45 contributes to the pyruvate binding site. Residue Tyr-133 is the Proton donor/acceptor of the active site. The active-site Schiff-base intermediate with substrate is the Lys-161. Pyruvate is bound at residue Ile-203.

Belongs to the DapA family. Homodimer.

The protein localises to the cytoplasm. It catalyses the reaction L-aspartate 4-semialdehyde + pyruvate = (2S,4S)-4-hydroxy-2,3,4,5-tetrahydrodipicolinate + H2O + H(+). It functions in the pathway amino-acid biosynthesis; L-lysine biosynthesis via DAP pathway; (S)-tetrahydrodipicolinate from L-aspartate: step 3/4. In terms of biological role, catalyzes the condensation of (S)-aspartate-beta-semialdehyde [(S)-ASA] and pyruvate to 4-hydroxy-tetrahydrodipicolinate (HTPA). This chain is 4-hydroxy-tetrahydrodipicolinate synthase, found in Ectopseudomonas mendocina (strain ymp) (Pseudomonas mendocina).